We begin with the raw amino-acid sequence, 274 residues long: Large ribosomal subunit protein uL2 (274 aa).

Positions 224 to 259 (AMNPVDHPHGGGEGRTSGGRHPVTPWGIPTKGYKTR) are disordered.

Belongs to the universal ribosomal protein uL2 family. In terms of assembly, part of the 50S ribosomal subunit. Forms a bridge to the 30S subunit in the 70S ribosome.

Functionally, one of the primary rRNA binding proteins. Required for association of the 30S and 50S subunits to form the 70S ribosome, for tRNA binding and peptide bond formation. It has been suggested to have peptidyltransferase activity; this is somewhat controversial. Makes several contacts with the 16S rRNA in the 70S ribosome. In Citrifermentans bemidjiense (strain ATCC BAA-1014 / DSM 16622 / JCM 12645 / Bem) (Geobacter bemidjiensis), this protein is Large ribosomal subunit protein uL2.